Reading from the N-terminus, the 705-residue chain is Beta-xylosidase (705 aa).

It belongs to the glycosyl hydrolase 52 family.

It carries out the reaction Hydrolysis of (1-&gt;4)-beta-D-xylans, to remove successive D-xylose residues from the non-reducing termini.. Its pathway is glycan degradation; xylan degradation. This Geobacillus stearothermophilus (Bacillus stearothermophilus) protein is Beta-xylosidase (xylA).